A 388-amino-acid chain; its full sequence is Formate-dependent phosphoribosylglycinamide formyltransferase (388 aa).

N(1)-(5-phospho-beta-D-ribosyl)glycinamide contacts are provided by residues 20–21 (EL) and E80. Residues R112, K153, 158 to 163 (SSGKGQ), 193 to 196 (EEFV), and E201 contribute to the ATP site. The ATP-grasp domain occupies 117-306 (RLASEKLGLR…EFEIHVRSIL (190 aa)). Mg(2+)-binding residues include E265 and E277. N(1)-(5-phospho-beta-D-ribosyl)glycinamide is bound by residues D284, K352, and 359–360 (RR).

It belongs to the PurK/PurT family. In terms of assembly, homodimer.

It carries out the reaction N(1)-(5-phospho-beta-D-ribosyl)glycinamide + formate + ATP = N(2)-formyl-N(1)-(5-phospho-beta-D-ribosyl)glycinamide + ADP + phosphate + H(+). It participates in purine metabolism; IMP biosynthesis via de novo pathway; N(2)-formyl-N(1)-(5-phospho-D-ribosyl)glycinamide from N(1)-(5-phospho-D-ribosyl)glycinamide (formate route): step 1/1. In terms of biological role, involved in the de novo purine biosynthesis. Catalyzes the transfer of formate to 5-phospho-ribosyl-glycinamide (GAR), producing 5-phospho-ribosyl-N-formylglycinamide (FGAR). Formate is provided by PurU via hydrolysis of 10-formyl-tetrahydrofolate. The chain is Formate-dependent phosphoribosylglycinamide formyltransferase from Methanococcus vannielii (strain ATCC 35089 / DSM 1224 / JCM 13029 / OCM 148 / SB).